We begin with the raw amino-acid sequence, 450 residues long: Endosomal transmembrane epsin interactor 1 (450 aa).

The N-terminal stretch at M1–G29 is a signal peptide. The Lumenal segment spans residues A30–K85. A helical transmembrane segment spans residues V86 to A106. Residues L107 to L450 are Cytoplasmic-facing. The mediates interaction with EPN1 stretch occupies residues L107 to L450. 2 consecutive short sequence motifs (PPxY; mediates interaction with ITCH) follow at residues P148–Y151 and P194–Y197. The interval D235–E284 is disordered. Positions N246–L256 are enriched in polar residues. The span at S273–E284 shows a compositional bias: basic and acidic residues. Residue K274 forms a Glycyl lysine isopeptide (Lys-Gly) (interchain with G-Cter in ubiquitin) linkage. Residue S275 is modified to Phosphoserine. Residues K329 and K365 each participate in a glycyl lysine isopeptide (Lys-Gly) (interchain with G-Cter in ubiquitin) cross-link.

Belongs to the ENTREP family. As to quaternary structure, interacts with ITCH; enhances the ubiquitination of CXCR4 by ITCH and the subsequent endocytosis and desensitization of the receptor. Interacts with EPN1. In terms of processing, monoubiquitinated at Lys-274, Lys-329 and Lys-365 by ITCH. In terms of tissue distribution, prominently expressed in muscle.

Its subcellular location is the early endosome membrane. It is found in the late endosome membrane. The protein localises to the recycling endosome membrane. The protein resides in the cell membrane. Functionally, functions as an activator of the E3 ubiquitin protein ligase ITCH in the ubiquitination of the CXCL12-activated CXCR4 receptor. Thereby, triggers CXCR4 endocytosis and desensitization, negatively regulating the CXCL12/CXCR4 signaling pathway. This Homo sapiens (Human) protein is Endosomal transmembrane epsin interactor 1.